Consider the following 350-residue polypeptide: Purine-rich element-binding protein gamma (350 aa).

Disordered stretches follow at residues 1 to 59 (MERA…GTSE) and 136 to 172 (GHRQ…HPHS). Residues 9–27 (GGGSGGGRGRGGKNVGGPG) are compositionally biased toward gly residues. Polar residues predominate over residues 47-59 (ASATPNQSGGTSE). A DNA-binding region spans residues 54–296 (SGGTSEIQEL…GIFLKVSEVR (243 aa)). Over residues 137–149 (HRQEHGQSKEQVS) the composition is skewed to basic and acidic residues. A phosphoserine mark is found at serine 163, serine 166, and serine 342.

The protein belongs to the PUR DNA-binding protein family. As to expression, isoform 1 is expressed in testis. Isoform 2 is expressed in blastocyst and kidney.

It localises to the nucleus. The polypeptide is Purine-rich element-binding protein gamma (Purg) (Mus musculus (Mouse)).